A 1272-amino-acid polypeptide reads, in one-letter code: AF4/FMR2 family member 2 (1272 aa).

2 disordered regions span residues 93–183 and 200–223; these read IPKN…LTQD and PQIGEVEESNPSAKEDSNPKSSGE. The segment covering 97-107 has biased composition (polar residues); it reads SVPQNPNNKNE. Positions 151–160 are enriched in basic and acidic residues; it reads SKPEWSRDSH. Positions 161 to 183 are enriched in polar residues; sequence NPSTVLASQASGQPNKMQTLTQD. Basic and acidic residues predominate over residues 212–223; sequence AKEDSNPKSSGE. Position 391 is a phosphoserine (serine 391). Disordered stretches follow at residues 418–491, 535–687, 779–829, and 842–903; these read KAKP…KWQL, TNAS…DQEE, SLHA…PEKK, and PPCI…QDKN. The segment covering 426–438 has biased composition (pro residues); sequence VNPPLATPQPPPA. Residues 439-452 are compositionally biased toward low complexity; the sequence is VQASGGSGSSSESE. Threonine 478 bears the Phosphothreonine mark. The span at 543–558 shows a compositional bias: basic and acidic residues; it reads EPKERPLLSLIREKAR. The segment covering 576–586 has biased composition (polar residues); it reads STTSETVSQRT. Residues 616 to 629 are compositionally biased toward basic and acidic residues; the sequence is PKEKESVELHDPPR. The span at 630-640 shows a compositional bias: basic residues; that stretch reads GRNKATAHKPA. A compositionally biased stretch (basic and acidic residues) spans 818 to 829; it reads PTEVAEKIPEKK. 2 stretches are compositionally biased toward pro residues: residues 844–853 and 874–883; these read CISPAPPHKP and FPPPLSPLPE.

This sequence belongs to the AF4 family.

It localises to the nucleus speckle. RNA-binding protein. Might be involved in alternative splicing regulation through an interaction with G-quartet RNA structure. This is AF4/FMR2 family member 2 (AFF2) from Pongo pygmaeus (Bornean orangutan).